The chain runs to 349 residues: Twinfilin-2-B (349 aa).

2 ADF-H domains span residues 4 to 139 (QTGI…KHVS) and 177 to 313 (GLSF…DEVH). The tract at residues 321-349 (QAFAKPKGPAGKRGQKRLIKGPGENGEDS) is disordered.

It belongs to the actin-binding proteins ADF family. Twinfilin subfamily. As to quaternary structure, interacts with G-actin; ADP-actin form and capping protein (CP).

Its subcellular location is the cytoplasm. The protein localises to the cytoskeleton. It is found in the perinuclear region. Functionally, actin-binding protein involved in motile and morphological processes. Inhibits actin polymerization, likely by sequestering G-actin. In Xenopus laevis (African clawed frog), this protein is Twinfilin-2-B (twf2-b).